The sequence spans 481 residues: Glutamate--tRNA ligase (481 aa).

Residues 28 to 38 (PSPTGFLHLGG) carry the 'HIGH' region motif. The span at 139–148 (RYDGTWRPEP) shows a compositional bias: basic and acidic residues. The interval 139 to 159 (RYDGTWRPEPGKTLPPVPADR) is disordered. The short motif at 260–264 (KLSKR) is the 'KMSKS' region element. Lysine 263 contributes to the ATP binding site.

Belongs to the class-I aminoacyl-tRNA synthetase family. Glutamate--tRNA ligase type 1 subfamily. Monomer.

Its subcellular location is the cytoplasm. The catalysed reaction is tRNA(Glu) + L-glutamate + ATP = L-glutamyl-tRNA(Glu) + AMP + diphosphate. Catalyzes the attachment of glutamate to tRNA(Glu) in a two-step reaction: glutamate is first activated by ATP to form Glu-AMP and then transferred to the acceptor end of tRNA(Glu). This Bordetella parapertussis (strain 12822 / ATCC BAA-587 / NCTC 13253) protein is Glutamate--tRNA ligase.